Consider the following 390-residue polypeptide: Serine/threonine/tyrosine-protein kinase HT1 (390 aa).

The Protein kinase domain occupies 86–359 (LFIGNKFASG…GLPLTSHASL (274 aa)). ATP contacts are provided by residues 92–100 (FASGAHSRI) and K113. D212 functions as the Proton acceptor in the catalytic mechanism.

The protein belongs to the protein kinase superfamily. Ser/Thr protein kinase family. As to quaternary structure, interacts with DTX56. Binds to MPK4 and MPK12. Associates to CBC1 and CBC2. In terms of processing, autophosphorylated. In terms of tissue distribution, mainly localizes in guard cells. Expressed at low level in leaves, stems, roots and flowers.

It is found in the cell membrane. The enzyme catalyses L-seryl-[protein] + ATP = O-phospho-L-seryl-[protein] + ADP + H(+). The catalysed reaction is L-threonyl-[protein] + ATP = O-phospho-L-threonyl-[protein] + ADP + H(+). It catalyses the reaction L-tyrosyl-[protein] + ATP = O-phospho-L-tyrosyl-[protein] + ADP + H(+). With respect to regulation, inhibited by MPK4 and MPK12. Serine/threonine/tyrosine kinase involved in the control of stomatal movement in response to CO(2). Functions as a major negative regulator of CO(2)-induced stomatal closing. Does not seem to be involved in stomatal closure in response to abscisic acid (ABA) or light. Involved in the control of red light-induced stomatal opening. Is epistatic to SRK2E/OST1 function during stomatal responses to red light and altered CO(2). Phosphorylates SRK2E/OST1 and GHR1 to prevents SRK2E/OST1- and GHR1-induced activation of SLAC1, thus preventing stomatal closure. Mediates the phosphorylation of CBC1 and CBC2. This is Serine/threonine/tyrosine-protein kinase HT1 from Arabidopsis thaliana (Mouse-ear cress).